A 263-amino-acid chain; its full sequence is Small ribosomal subunit protein uS2 (263 aa).

Belongs to the universal ribosomal protein uS2 family. As to quaternary structure, component of the small ribosomal subunit. Mature ribosomes consist of a small (40S) and a large (60S) subunit. The 40S subunit contains about 33 different proteins and 1 molecule of RNA (18S). The 60S subunit contains about 49 different proteins and 3 molecules of RNA (25S, 5.8S and 5S). Interacts with RPS21.

It is found in the cytoplasm. Its function is as follows. Required for the assembly and/or stability of the 40S ribosomal subunit. Required for the processing of the 20S rRNA-precursor to mature 18S rRNA in a late step of the maturation of 40S ribosomal subunits. The protein is Small ribosomal subunit protein uS2 of Vairimorpha ceranae (strain BRL01) (Microsporidian parasite).